We begin with the raw amino-acid sequence, 624 residues long: 1-deoxy-D-xylulose-5-phosphate synthase (624 aa).

Thiamine diphosphate is bound by residues H74 and 115-117 (GHS). D146 contributes to the Mg(2+) binding site. Thiamine diphosphate is bound by residues 147-148 (GA), N175, Y286, and E367. N175 is a binding site for Mg(2+).

Belongs to the transketolase family. DXPS subfamily. As to quaternary structure, homodimer. The cofactor is Mg(2+). Requires thiamine diphosphate as cofactor.

It carries out the reaction D-glyceraldehyde 3-phosphate + pyruvate + H(+) = 1-deoxy-D-xylulose 5-phosphate + CO2. It functions in the pathway metabolic intermediate biosynthesis; 1-deoxy-D-xylulose 5-phosphate biosynthesis; 1-deoxy-D-xylulose 5-phosphate from D-glyceraldehyde 3-phosphate and pyruvate: step 1/1. In terms of biological role, catalyzes the acyloin condensation reaction between C atoms 2 and 3 of pyruvate and glyceraldehyde 3-phosphate to yield 1-deoxy-D-xylulose-5-phosphate (DXP). The sequence is that of 1-deoxy-D-xylulose-5-phosphate synthase from Alkaliphilus oremlandii (strain OhILAs) (Clostridium oremlandii (strain OhILAs)).